The primary structure comprises 216 residues: Cytidylate kinase (216 aa).

ATP is bound at residue Gly7–Thr15.

Belongs to the cytidylate kinase family. Type 1 subfamily.

Its subcellular location is the cytoplasm. It catalyses the reaction CMP + ATP = CDP + ADP. The enzyme catalyses dCMP + ATP = dCDP + ADP. This is Cytidylate kinase from Chlamydia trachomatis serovar L2 (strain ATCC VR-902B / DSM 19102 / 434/Bu).